Here is a 425-residue protein sequence, read N- to C-terminus: UDP-N-acetylglucosamine 1-carboxyvinyltransferase (425 aa).

A phosphoenolpyruvate-binding site is contributed by 23–24 (KN). Residue Arg100 coordinates UDP-N-acetyl-alpha-D-glucosamine. The active-site Proton donor is the Cys124. Cys124 carries the 2-(S-cysteinyl)pyruvic acid O-phosphothioketal modification. UDP-N-acetyl-alpha-D-glucosamine is bound by residues Asp313 and Ile335.

This sequence belongs to the EPSP synthase family. MurA subfamily.

It is found in the cytoplasm. The catalysed reaction is phosphoenolpyruvate + UDP-N-acetyl-alpha-D-glucosamine = UDP-N-acetyl-3-O-(1-carboxyvinyl)-alpha-D-glucosamine + phosphate. The protein operates within cell wall biogenesis; peptidoglycan biosynthesis. Its function is as follows. Cell wall formation. Adds enolpyruvyl to UDP-N-acetylglucosamine. This is UDP-N-acetylglucosamine 1-carboxyvinyltransferase from Wolbachia sp. subsp. Brugia malayi (strain TRS).